The following is a 428-amino-acid chain: MTILPFLAAVFVLQLLSTLTVAEIKSFTISNDSRPVILLEKFGIIEIGHVTVSVSSVSVLSPILDSSKLGFFVLSEESLPHVLLELQQNFSFCVLDSHYILHFFTFVDLSPPPRSQFSKSYPITSPNDYSLFFANCVPETRVSMKVHTEIYHDLYPNGSRDYLLAGSAQLPGLYLVFFLCYLSFLCFWLCFCWNHKQIVKRIHLLMTALLLVKSLTLICAAVYKHYVKVTGTAHGWNIVFYIFQFISVVLLFMVIVLIGNGWSFLKPKLHVKEKKLLVIVVPLQVLANIASIVIGETGPYTQDWVSWNQIFFLADITCCCAIVFAMVWSMCCLRETSKTDGKAVKNLAKLPVLRKFYVLVIGYLFFTRIVVVVMKMKADFTYQWVSNAAEEIATLSFYCLMFYMFRPIEKNEYCDVDDEEEIVELSLK.

The N-terminal stretch at 1-22 is a signal peptide; the sequence is MTILPFLAAVFVLQLLSTLTVA. Residues N31, N89, and N157 are each glycosylated (N-linked (GlcNAc...) asparagine). 7 helical membrane passes run 173 to 193, 202 to 222, 238 to 258, 276 to 296, 310 to 330, 356 to 376, and 385 to 405; these read LYLV…CFCW, IHLL…CAAV, IVFY…IVLI, LLVI…VIGE, IFFL…VWSM, FYVL…VMKM, and VSNA…FYMF.

This sequence belongs to the LU7TM family.

It localises to the membrane. G-protein coupled receptor. Plays a role in plants and microbes interactions. This chain is Protein CANDIDATE G-PROTEIN COUPLED RECEPTOR 6, found in Arabidopsis thaliana (Mouse-ear cress).